Reading from the N-terminus, the 212-residue chain is Metalloproteinase inhibitor 3 (212 aa).

The N-terminal stretch at 1–24 (MTAWLGFLAVFLCSWSLRDLVAEA) is a signal peptide. C25 provides a ligand contact to Zn(2+). 2 involved in metalloproteinase-binding regions span residues 25–28 (CTCV) and 89–90 (ES). 6 cysteine pairs are disulfide-bonded: C25-C92, C27-C119, C37-C144, C146-C193, C151-C156, and C164-C185. The 120-residue stretch at 25 to 144 (CTCVPIHPQD…GLNHRYHLGC (120 aa)) folds into the NTR domain.

Belongs to the protease inhibitor I35 (TIMP) family.

Its subcellular location is the secreted. It is found in the extracellular space. It localises to the extracellular matrix. In terms of biological role, complexes with metalloproteinases (such as collagenases) and irreversibly inactivates them by binding to their catalytic zinc cofactor. May form part of a tissue-specific acute response to remodeling stimuli. The protein is Metalloproteinase inhibitor 3 (TIMP3) of Gallus gallus (Chicken).